The chain runs to 324 residues: DNA-directed RNA polymerase subunit alpha (324 aa).

The interval 1 to 228 (MIEIQKPTIR…EHFNLFTDLS (228 aa)) is alpha N-terminal domain (alpha-NTD). An alpha C-terminal domain (alpha-CTD) region spans residues 245 to 324 (RNKLLDMTIE…STPKGEEEEK (80 aa)).

The protein belongs to the RNA polymerase alpha chain family. In terms of assembly, homodimer. The RNAP catalytic core consists of 2 alpha, 1 beta, 1 beta' and 1 omega subunit. When a sigma factor is associated with the core the holoenzyme is formed, which can initiate transcription.

It catalyses the reaction RNA(n) + a ribonucleoside 5'-triphosphate = RNA(n+1) + diphosphate. Functionally, DNA-dependent RNA polymerase catalyzes the transcription of DNA into RNA using the four ribonucleoside triphosphates as substrates. The protein is DNA-directed RNA polymerase subunit alpha of Caldicellulosiruptor saccharolyticus (strain ATCC 43494 / DSM 8903 / Tp8T 6331).